The sequence spans 367 residues: Dihydroorotate dehydrogenase (quinone) (367 aa).

FMN contacts are provided by residues Ala-61–Lys-65 and Thr-85. Lys-65 is a binding site for substrate. Asn-110–Phe-114 serves as a coordination point for substrate. Asn-138 and Asn-169 together coordinate FMN. Residue Asn-169 coordinates substrate. The Nucleophile role is filled by Ser-172. Residue Asn-174 coordinates substrate. Residues Lys-212 and Thr-240 each contribute to the FMN site. Asn-241–Thr-242 provides a ligand contact to substrate. FMN is bound by residues Gly-263, Gly-292, and Tyr-313 to Ser-314.

The protein belongs to the dihydroorotate dehydrogenase family. Type 2 subfamily. In terms of assembly, monomer. FMN is required as a cofactor.

It is found in the cell membrane. The catalysed reaction is (S)-dihydroorotate + a quinone = orotate + a quinol. It functions in the pathway pyrimidine metabolism; UMP biosynthesis via de novo pathway; orotate from (S)-dihydroorotate (quinone route): step 1/1. In terms of biological role, catalyzes the conversion of dihydroorotate to orotate with quinone as electron acceptor. The sequence is that of Dihydroorotate dehydrogenase (quinone) from Rhodospirillum rubrum (strain ATCC 11170 / ATH 1.1.1 / DSM 467 / LMG 4362 / NCIMB 8255 / S1).